Consider the following 328-residue polypeptide: Ribose-phosphate pyrophosphokinase (328 aa).

ATP contacts are provided by residues 39–41 and 98–99; these read DGE and RQ. 2 residues coordinate Mg(2+): histidine 132 and aspartate 172. Residue lysine 195 is part of the active site. Residues arginine 197, aspartate 221, and 225–229 contribute to the D-ribose 5-phosphate site; that span reads DTGGT.

This sequence belongs to the ribose-phosphate pyrophosphokinase family. Class I subfamily. In terms of assembly, homohexamer. Mg(2+) serves as cofactor.

It is found in the cytoplasm. It carries out the reaction D-ribose 5-phosphate + ATP = 5-phospho-alpha-D-ribose 1-diphosphate + AMP + H(+). It functions in the pathway metabolic intermediate biosynthesis; 5-phospho-alpha-D-ribose 1-diphosphate biosynthesis; 5-phospho-alpha-D-ribose 1-diphosphate from D-ribose 5-phosphate (route I): step 1/1. Its function is as follows. Involved in the biosynthesis of the central metabolite phospho-alpha-D-ribosyl-1-pyrophosphate (PRPP) via the transfer of pyrophosphoryl group from ATP to 1-hydroxyl of ribose-5-phosphate (Rib-5-P). The polypeptide is Ribose-phosphate pyrophosphokinase (Mycoplasma pneumoniae (strain ATCC 29342 / M129 / Subtype 1) (Mycoplasmoides pneumoniae)).